A 577-amino-acid chain; its full sequence is Arginine--tRNA ligase (577 aa).

A 'HIGH' region motif is present at residues 122 to 132; that stretch reads PNVAKEMHVGH.

It belongs to the class-I aminoacyl-tRNA synthetase family. As to quaternary structure, monomer.

Its subcellular location is the cytoplasm. It catalyses the reaction tRNA(Arg) + L-arginine + ATP = L-arginyl-tRNA(Arg) + AMP + diphosphate. The chain is Arginine--tRNA ligase from Shigella flexneri serotype 5b (strain 8401).